We begin with the raw amino-acid sequence, 411 residues long: UPF0261 protein SACE_5696 (411 aa).

It belongs to the UPF0261 family.

This chain is UPF0261 protein SACE_5696, found in Saccharopolyspora erythraea (strain ATCC 11635 / DSM 40517 / JCM 4748 / NBRC 13426 / NCIMB 8594 / NRRL 2338).